A 240-amino-acid polypeptide reads, in one-letter code: Probable transcriptional regulatory protein BLi02909/BL01150 (240 aa).

The segment covering 1 to 14 (MAGHSKWKNIQRRK) has biased composition (basic residues). The interval 1–21 (MAGHSKWKNIQRRKNAQDAKR) is disordered.

Belongs to the TACO1 family.

The protein resides in the cytoplasm. The sequence is that of Probable transcriptional regulatory protein BLi02909/BL01150 from Bacillus licheniformis (strain ATCC 14580 / DSM 13 / JCM 2505 / CCUG 7422 / NBRC 12200 / NCIMB 9375 / NCTC 10341 / NRRL NRS-1264 / Gibson 46).